Reading from the N-terminus, the 205-residue chain is SREBP regulating gene protein (205 aa).

The Cytoplasmic portion of the chain corresponds to 1-16 (MVNLAAMVWRRLLRKR). The helical transmembrane segment at 17–35 (WVLALVFGLSLVYFLSSTF) threads the bilayer. Over 36 to 205 (KQEERAVRDR…GESPPELFPA (170 aa)) the chain is Lumenal. A glycan (N-linked (GlcNAc...) asparagine) is linked at N67.

This sequence belongs to the SPRING family. In terms of assembly, interacts with SCAP.

The protein localises to the golgi apparatus membrane. Functionally, positively regulates hepatic SREBP signaling pathway by modulating the proper localization of SCAP (SREBP cleavage-activating protein) to the endoplasmic reticulum, thereby controlling the level of functional SCAP. The polypeptide is SREBP regulating gene protein (Homo sapiens (Human)).